Consider the following 354-residue polypeptide: NADH-quinone oxidoreductase subunit H (354 aa).

The next 10 helical transmembrane spans lie at 12 to 32 (LLGG…LIAP), 62 to 82 (PWGL…EIIL), 89 to 109 (GLFL…WVVV), 124 to 144 (LLFL…AGWA), 162 to 182 (VSYE…SGTL), 203 to 223 (FLSW…ISGL), 239 to 259 (EIVA…FFLA), 263 to 283 (NMIL…LPPI), 291 to 311 (IPGW…FLWV), and 326 to 346 (LGWK…GLWI).

It belongs to the complex I subunit 1 family. In terms of assembly, NDH-1 is composed of 14 different subunits. Subunits NuoA, H, J, K, L, M, N constitute the membrane sector of the complex.

The protein localises to the cell inner membrane. The enzyme catalyses a quinone + NADH + 5 H(+)(in) = a quinol + NAD(+) + 4 H(+)(out). In terms of biological role, NDH-1 shuttles electrons from NADH, via FMN and iron-sulfur (Fe-S) centers, to quinones in the respiratory chain. The immediate electron acceptor for the enzyme in this species is believed to be ubiquinone. Couples the redox reaction to proton translocation (for every two electrons transferred, four hydrogen ions are translocated across the cytoplasmic membrane), and thus conserves the redox energy in a proton gradient. This subunit may bind ubiquinone. The protein is NADH-quinone oxidoreductase subunit H of Methylibium petroleiphilum (strain ATCC BAA-1232 / LMG 22953 / PM1).